The chain runs to 303 residues: tRNA dimethylallyltransferase (303 aa).

9 to 16 (GPTASGKS) contacts ATP. Position 11–16 (11–16 (TASGKS)) interacts with substrate. The tract at residues 34–37 (DSKQ) is interaction with substrate tRNA.

Belongs to the IPP transferase family. As to quaternary structure, monomer. It depends on Mg(2+) as a cofactor.

It carries out the reaction adenosine(37) in tRNA + dimethylallyl diphosphate = N(6)-dimethylallyladenosine(37) in tRNA + diphosphate. Functionally, catalyzes the transfer of a dimethylallyl group onto the adenine at position 37 in tRNAs that read codons beginning with uridine, leading to the formation of N6-(dimethylallyl)adenosine (i(6)A). The sequence is that of tRNA dimethylallyltransferase from Ehrlichia chaffeensis (strain ATCC CRL-10679 / Arkansas).